The primary structure comprises 489 residues: Phosphoglucosamine mutase (489 aa).

Catalysis depends on S136, which acts as the Phosphoserine intermediate. Residues S136, D275, D277, and D279 each coordinate Mg(2+). At S136 the chain carries Phosphoserine.

It belongs to the phosphohexose mutase family. Mg(2+) is required as a cofactor. Post-translationally, activated by phosphorylation.

It catalyses the reaction alpha-D-glucosamine 1-phosphate = D-glucosamine 6-phosphate. Functionally, catalyzes the conversion of glucosamine-6-phosphate to glucosamine-1-phosphate. The polypeptide is Phosphoglucosamine mutase (Trichodesmium erythraeum (strain IMS101)).